A 198-amino-acid polypeptide reads, in one-letter code: Cerebellin-4 (198 aa).

An N-terminal signal peptide occupies residues 1 to 24 (MGSARRALSVVPAVLLILVLPVWA). Asparagine 26 and asparagine 85 each carry an N-linked (GlcNAc...) asparagine glycan. Positions 63–198 (AANSKVAFSA…TFSGFLVFPL (136 aa)) constitute a C1q domain.

As to quaternary structure, homohexamer; disulfide-linked homotrimers. The trimers are assembled via the globular C1q domains. The trimers associate via N-terminal cysteine residues to form disulfide-linked hexamers. May form oligomers with CBLN1, CBLN2 and CBLN3 prior to secretion. Once secreted, does not interact with other CBLN family members. Strongly interacts with DCC in a NTN1-displaceable fashion. Weakly binds to NRXN1 and NRXN2 long and short isoforms produced by alternative promoter usage. Interaction with NRXN3 short isoform is hardly detectable; no interaction at all with NRXN3 long isoform. Does not interact with NEO1, GRID1 and GRID2. Sialoglycoprotein. As to expression, expressed in brain with high levels in particular thalamic nuclei. In the thalamus, predominantly expressed in neurons within the parafascicular nucleus. Found in the hippocampus, mostly in the dendrites and somata of pyramidal neurons (at protein level). Very low or no expression in most other brain regions. Highly expressed in the ventral medial habenula.

The protein localises to the secreted. Its subcellular location is the synapse. Its function is as follows. Acts as a synaptic organizer in specific subsets of neurons in the brain. Essential for the formation and maintenance of inhibitory GABAergic synapses. Promotes the development of dendrite-targeting inhibitory GABAergic synapses made by somatostatin-positive interneurons. May contribute to the function of ventral medial habenula region of the brain implicated in the regulation of anxiety-related behaviors. May play a role in CBLN3 export from the endoplasmic reticulum and secretion. In Mus musculus (Mouse), this protein is Cerebellin-4 (Cbln4).